A 388-amino-acid chain; its full sequence is P2X receptor E (388 aa).

At 1–28 (MNFRNIDWDSLFSYSTIKIVRIRDKRLG) the chain is on the cytoplasmic side. The helical transmembrane segment at 29–49 (ILHFAFLIGIILYIIVGTIFL) threads the bilayer. Residues 50 to 312 (QKKYLVLESP…QLGQFDFQTM (263 aa)) lie on the Lumenal side of the membrane. Residues 291–304 (RHGVRIIFIQTGQL) are pore-forming motif. A helical transmembrane segment spans residues 313 to 333 (LLTFVSGIGLVTAASLIVDII). Residues 334–388 (ATRIMPQRSRYQELKFQDSSINNTQKTPTNDHTPLLKDNEDTINENSYQNNSYEK) lie on the Cytoplasmic side of the membrane. Positions 349–388 (FQDSSINNTQKTPTNDHTPLLKDNEDTINENSYQNNSYEK) are disordered. 2 stretches are compositionally biased toward polar residues: residues 350–365 (QDSS…TNDH) and 377–388 (NENSYQNNSYEK).

This sequence belongs to the P2X receptor family.

It localises to the contractile vacuole membrane. Its function is as follows. P2X receptors are ATP-gated ion channels that play a role in intracellular calcium signaling. Not required for the purinergic response to extracellular nucleotides. Not essential for osmoregulation. Inward currents evoked by intracellular ATP. ATP analog beta, gamma-imido-ATP is a weak partial agonist of p2xE. Exclusively selective for ATP over other nucleotides. Insensitive to copper and P2 receptor antagonists PPADS and suramin but strongly inhibited by sodium ions. More permeable to ammonium than either sodium or potassium ions and less permeable to choline. Permeable to calcium ions, but not chloride. This chain is P2X receptor E (p2xE), found in Dictyostelium discoideum (Social amoeba).